Consider the following 523-residue polypeptide: Calcium-dependent protein kinase 1 (523 aa).

Positions 1–36 (MGCNQSKSANDVRGNKVNHVNSKKKNNKREDTNDGE) are disordered. The N-myristoyl glycine moiety is linked to residue glycine 2. Cysteine 3 is lipidated: S-palmitoyl cysteine. The region spanning 57-324 (YFKVRKLGSG…AEEALNSRWI (268 aa)) is the Protein kinase domain. Residues 63-71 (LGSGAYGEV), lysine 86, and lysine 90 each bind ATP. Serine 65 bears the Phosphoserine mark. Serine 117 is modified (phosphoserine). Aspartate 190 serves as the catalytic Proton acceptor. Serine 216 and serine 219 each carry phosphoserine. Threonine 230 carries the phosphothreonine modification. Serine 334 carries the phosphoserine modification. Positions 345–352 (NMRKFEGS) match the J domain autoinhibitory motif motif. A j domain region spans residues 345 to 363 (NMRKFEGSQKLAQAAILFI). The J domain interacts with the EF-hand domains motif lies at 353–363 (QKLAQAAILFI). EF-hand domains are found at residues 371-406 (EERK…LRNF), 415-450 (NVEE…KQIL), 451-486 (FSEE…TSIS), and 487-520 (EKTW…ICDH). Residues aspartate 384, asparagine 386, aspartate 388, glutamine 390, glutamate 395, aspartate 428, aspartate 430, asparagine 432, tyrosine 434, glutamate 439, aspartate 464, aspartate 466, serine 468, lysine 470, glutamate 475, aspartate 498, asparagine 500, aspartate 502, methionine 504, and glutamate 509 each contribute to the Ca(2+) site.

This sequence belongs to the protein kinase superfamily. Ser/Thr protein kinase family. CDPK subfamily. In terms of assembly, monomer. Mg(2+) serves as cofactor. In terms of processing, myristoylated. Myristoylation and palmitoylation are required for the localization to the parasitophorous vacuole membrane. Post-translationally, palmitoylated. Palmitoylation increases in merozoites in response to low level of extracellular K(+) in the host blood. Myristoylation and palmitoylation are required for the localization to the parasitophorous vacuole membrane. Phosphorylation at Thr-230 may regulate CDPK1 kinase activity. Phosphorylation increases in response to an increase in intracellular Ca(2+) levels. Autophosphorylated in vitro. Autophosphorylation does not affect membrane localization in vitro.

It localises to the membrane. The protein localises to the cell membrane. It is found in the parasitophorous vacuole membrane. The protein resides in the cytoplasm. Its subcellular location is the cell projection. It localises to the cilium. The protein localises to the flagellum. It is found in the host cell membrane. The enzyme catalyses L-seryl-[protein] + ATP = O-phospho-L-seryl-[protein] + ADP + H(+). It catalyses the reaction L-threonyl-[protein] + ATP = O-phospho-L-threonyl-[protein] + ADP + H(+). Activated by calcium. Upon calcium binding to the EF-hand domains, the C-terminus of the junction domain (J domain) undergoes a conformational change which results in the dissociation of the pseudo-substrate inhibitory motif from the catalytic domain. This, in turn may facilitate the autophosphorylation of the activation loop at Thr-230, which leads to the kinase activation. Functionally, calcium-dependent protein kinase which acts as a sensor and effector of intracellular Ca(2+) levels probably in part downstream of cGMP-activated PKG kinase. During the liver stage, involved in sporozoite motility and thus in sporozoite invasion of host hepatocytes, probably together with CDPK4 and CDPK5. In the mosquito midgut and during the last stage of male gamete exflagellation, may play a role in the rupture of the host erythrocyte membrane. In the mosquito midgut, required for the differentiation of the zygote into the ookinete by promoting the translational activation of a subset of repressed mRNAs; these mRNAs are kept repressed in the zygote by the DOZI- or CITH-containing mRNP complexes. Dispensable during the asexual blood stage. In Plasmodium berghei (strain Anka), this protein is Calcium-dependent protein kinase 1.